A 217-amino-acid polypeptide reads, in one-letter code: ATP phosphoribosyltransferase (217 aa).

The protein belongs to the ATP phosphoribosyltransferase family. Short subfamily. In terms of assembly, heteromultimer composed of HisG and HisZ subunits.

It is found in the cytoplasm. The catalysed reaction is 1-(5-phospho-beta-D-ribosyl)-ATP + diphosphate = 5-phospho-alpha-D-ribose 1-diphosphate + ATP. Its pathway is amino-acid biosynthesis; L-histidine biosynthesis; L-histidine from 5-phospho-alpha-D-ribose 1-diphosphate: step 1/9. In terms of biological role, catalyzes the condensation of ATP and 5-phosphoribose 1-diphosphate to form N'-(5'-phosphoribosyl)-ATP (PR-ATP). Has a crucial role in the pathway because the rate of histidine biosynthesis seems to be controlled primarily by regulation of HisG enzymatic activity. In Burkholderia multivorans (strain ATCC 17616 / 249), this protein is ATP phosphoribosyltransferase.